A 359-amino-acid chain; its full sequence is 3-dehydroquinate synthase (359 aa).

Residues 71–76 (DGEAYK), 105–109 (GVVGD), 129–130 (TT), Lys-142, and Lys-151 contribute to the NAD(+) site. Zn(2+)-binding residues include Glu-184, His-247, and His-264.

The protein belongs to the sugar phosphate cyclases superfamily. Dehydroquinate synthase family. Co(2+) serves as cofactor. The cofactor is Zn(2+). Requires NAD(+) as cofactor.

It localises to the cytoplasm. The enzyme catalyses 7-phospho-2-dehydro-3-deoxy-D-arabino-heptonate = 3-dehydroquinate + phosphate. It participates in metabolic intermediate biosynthesis; chorismate biosynthesis; chorismate from D-erythrose 4-phosphate and phosphoenolpyruvate: step 2/7. Functionally, catalyzes the conversion of 3-deoxy-D-arabino-heptulosonate 7-phosphate (DAHP) to dehydroquinate (DHQ). The protein is 3-dehydroquinate synthase of Burkholderia lata (strain ATCC 17760 / DSM 23089 / LMG 22485 / NCIMB 9086 / R18194 / 383).